Reading from the N-terminus, the 367-residue chain is MNVLEQFKQLDNMPEQYKTMDRDELEARARAVKEQLGRRLFIPGHHYQKDEVIQFADATGDSLQLAQLAAKNNEAEYIVFCGVHFMAETADILTSEEQTVILPDLRAGCSMADMADVFQVERAWAALTDRFGETILPLVYVNSTAAIKAFVGRNGGATVTSSNAQKMVAWAFSQKERIFFLPDQHLGRNTAYALGVGLDEMAVWDPYEETLQGNGDFDKVKVILWKGHCSVHENFNVRQIEHIRQTKPETKVIVHPECSWDVVQQADYAGSTKYIIETIRNASPGSRWAIGTEMNLVNRLMHEHPDKEIISLNPYMCPCLTMNRIDLPHFVWALESLSEGTVVNRITVPKEVAFEAKLALERMLALA.

Iminosuccinate is bound by residues histidine 45 and serine 62. Cysteine 109 lines the [4Fe-4S] cluster pocket. Iminosuccinate is bound by residues 140 to 142 and serine 161; that span reads YVN. Cysteine 229 contributes to the [4Fe-4S] cluster binding site. Iminosuccinate contacts are provided by residues 255 to 257 and threonine 272; that span reads HPE. [4Fe-4S] cluster is bound at residue cysteine 319.

It belongs to the quinolinate synthase family. Type 3 subfamily. The cofactor is [4Fe-4S] cluster.

It is found in the cytoplasm. It carries out the reaction iminosuccinate + dihydroxyacetone phosphate = quinolinate + phosphate + 2 H2O + H(+). It participates in cofactor biosynthesis; NAD(+) biosynthesis; quinolinate from iminoaspartate: step 1/1. Functionally, catalyzes the condensation of iminoaspartate with dihydroxyacetone phosphate to form quinolinate. This is Quinolinate synthase from Geobacillus thermodenitrificans (strain NG80-2).